A 367-amino-acid polypeptide reads, in one-letter code: MKASPHRPTKVLIHLGAIRQNIQQMGAHIPQGTLKWAVVKANAYGHGAVAVAKAIQDDVDGFCVSNIDEAIELRQAGLSKPILILGVSEIEAVALAKEYDFTLTVAGLEWIQALLDKEVDLTGLTVHLKIDSGMGRIGFREASEVEQAQDLLQQHGVRVEGIFTHFATADEESDDYFNAQLERFKTILASMKEVPELVHASNSATTLWHVETIFNAVRMGDAMYGLNPSGAVLDLPYDLIPALTLESALVHVKTVPAGACMGYGATYQADSEQVIATVPIGYADGWTRDMQNFSVLVDGQACPIVGRVSMDQITIRLPKLYPLGTKVTLIGSNGDKEITATQVATYRVTINYEVVCLLSDRIPREYY.

The Proton acceptor; specific for D-alanine role is filled by Lys40. N6-(pyridoxal phosphate)lysine is present on Lys40. Residue Arg136 participates in substrate binding. The active-site Proton acceptor; specific for L-alanine is the Tyr263. Met310 provides a ligand contact to substrate.

Belongs to the alanine racemase family. Pyridoxal 5'-phosphate is required as a cofactor.

The catalysed reaction is L-alanine = D-alanine. Its pathway is amino-acid biosynthesis; D-alanine biosynthesis; D-alanine from L-alanine: step 1/1. Catalyzes the interconversion of L-alanine and D-alanine. May also act on other amino acids. The polypeptide is Alanine racemase (alr) (Streptococcus pneumoniae (strain Taiwan19F-14)).